We begin with the raw amino-acid sequence, 348 residues long: Protein RecA (348 aa).

64–71 is an ATP binding site; that stretch reads GPESSGKT. The span at 324–335 shows a compositional bias: basic and acidic residues; it reads EYEIDGSNKEPL. The tract at residues 324-348 is disordered; sequence EYEIDGSNKEPLAETEETLSLLDDE. Over residues 336–348 the composition is skewed to acidic residues; the sequence is AETEETLSLLDDE.

The protein belongs to the RecA family.

The protein resides in the cytoplasm. Its function is as follows. Can catalyze the hydrolysis of ATP in the presence of single-stranded DNA, the ATP-dependent uptake of single-stranded DNA by duplex DNA, and the ATP-dependent hybridization of homologous single-stranded DNAs. It interacts with LexA causing its activation and leading to its autocatalytic cleavage. The polypeptide is Protein RecA (Listeria ivanovii).